The sequence spans 167 residues: Leukotoxin-activating lysine-acyltransferase LktC serotype A11 (167 aa).

Catalysis depends on residues histidine 22 and aspartate 91.

The protein belongs to the RTX toxin acyltransferase family.

Its subcellular location is the cytoplasm. The enzyme catalyses a fatty acyl-[ACP] + L-lysyl-[protein] = N(6)-(fatty acyl)-L-lysyl-[protein] + holo-[ACP] + H(+). Functionally, involved in fatty acylation of the protoxin (LktA) at two internal lysine residues, thereby converting it to the active toxin. This is Leukotoxin-activating lysine-acyltransferase LktC serotype A11 (lktC) from Mannheimia haemolytica (Pasteurella haemolytica).